The following is a 250-amino-acid chain: Cell division protein ZapD (250 aa).

Belongs to the ZapD family. Interacts with FtsZ.

It localises to the cytoplasm. Cell division factor that enhances FtsZ-ring assembly. Directly interacts with FtsZ and promotes bundling of FtsZ protofilaments, with a reduction in FtsZ GTPase activity. This chain is Cell division protein ZapD, found in Pectobacterium carotovorum subsp. carotovorum (strain PC1).